The sequence spans 413 residues: Serine/threonine-protein phosphatase 2A 55 kDa regulatory subunit B beta isoform (413 aa).

4 WD repeats span residues Glu-1–Val-31, Glu-57–Glu-98, Ala-141–Asn-179, and Glu-190–Arg-230. Ser-245 carries the post-translational modification Phosphoserine. WD repeat units follow at residues Glu-249 to Glu-287, Glu-304 to Leu-345, and Asp-380 to Val-412. Tyr-265 is subject to Phosphotyrosine. At Thr-268 the chain carries Phosphothreonine.

It belongs to the phosphatase 2A regulatory subunit B family. As to quaternary structure, PP2A consists of a common heterodimeric core enzyme, composed of a 36 kDa catalytic subunit (subunit C) and a 65 kDa constant regulatory subunit (PR65 or subunit A), that associates with a variety of regulatory subunits. Proteins that associate with the core dimer include three families of regulatory subunits B (the R2/B/PR55/B55, R3/B''/PR72/PR130/PR59 and R5/B'/B56 families), the 48 kDa variable regulatory subunit, viral proteins, and cell signaling molecules. Interacts with TOMM22. Interacts with IER5 (via N- and C-terminal regions). Brain.

It is found in the cytoplasm. The protein localises to the cytoskeleton. The protein resides in the membrane. Functionally, the B regulatory subunit might modulate substrate selectivity and catalytic activity, and might also direct the localization of the catalytic enzyme to a particular subcellular compartment. This is Serine/threonine-protein phosphatase 2A 55 kDa regulatory subunit B beta isoform (PPP2R2B) from Oryctolagus cuniculus (Rabbit).